Here is a 129-residue protein sequence, read N- to C-terminus: NADPH-dependent 7-cyano-7-deazaguanine reductase (129 aa).

Cysteine 43 serves as the catalytic Thioimide intermediate. Aspartate 50 functions as the Proton donor in the catalytic mechanism. Substrate contacts are provided by residues valine 65–leucine 67 and histidine 84–glutamate 85.

It belongs to the GTP cyclohydrolase I family. QueF type 1 subfamily.

The protein resides in the cytoplasm. The enzyme catalyses 7-aminomethyl-7-carbaguanine + 2 NADP(+) = 7-cyano-7-deazaguanine + 2 NADPH + 3 H(+). It functions in the pathway tRNA modification; tRNA-queuosine biosynthesis. Functionally, catalyzes the NADPH-dependent reduction of 7-cyano-7-deazaguanine (preQ0) to 7-aminomethyl-7-deazaguanine (preQ1). This Aquifex aeolicus (strain VF5) protein is NADPH-dependent 7-cyano-7-deazaguanine reductase.